Here is a 390-residue protein sequence, read N- to C-terminus: Chorismate synthase 2 (390 aa).

2 residues coordinate NADP(+): Arg39 and Arg45. FMN is bound by residues 132–134, 253–254, Gly298, 313–317, and Arg339; these read RSS, NA, and KPIPT.

It belongs to the chorismate synthase family. In terms of assembly, homotetramer. It depends on FMNH2 as a cofactor.

It catalyses the reaction 5-O-(1-carboxyvinyl)-3-phosphoshikimate = chorismate + phosphate. It participates in metabolic intermediate biosynthesis; chorismate biosynthesis; chorismate from D-erythrose 4-phosphate and phosphoenolpyruvate: step 7/7. Functionally, catalyzes the anti-1,4-elimination of the C-3 phosphate and the C-6 proR hydrogen from 5-enolpyruvylshikimate-3-phosphate (EPSP) to yield chorismate, which is the branch point compound that serves as the starting substrate for the three terminal pathways of aromatic amino acid biosynthesis. This reaction introduces a second double bond into the aromatic ring system. This is Chorismate synthase 2 from Bacillus thuringiensis (strain Al Hakam).